The chain runs to 81 residues: Putative membrane protein insertion efficiency factor (81 aa).

This sequence belongs to the UPF0161 family.

The protein localises to the cell inner membrane. Could be involved in insertion of integral membrane proteins into the membrane. The chain is Putative membrane protein insertion efficiency factor from Legionella pneumophila subsp. pneumophila (strain Philadelphia 1 / ATCC 33152 / DSM 7513).